The chain runs to 540 residues: Probable H/ACA ribonucleoprotein complex subunit 4 (540 aa).

Residues 1-24 (MTTDKKSKSKSSEKSTQEVEQVIK) form a disordered region. D109 serves as the catalytic Nucleophile. The region spanning 280 to 355 (YKRIVVKDSA…VVATIKRVIM (76 aa)) is the PUA domain. Residues 414–540 (SPVESMNVDT…DKKEKKKSKN (127 aa)) form a disordered region. Residues 448 to 494 (KKEKKDKKEKKKDSSDDESEEEKSSKKDKKEKKEKKEKKEKKSSKDD) are a coiled coil. Residues 473–489 (KKDKKEKKEKKEKKEKK) are compositionally biased toward basic residues. Composition is skewed to basic and acidic residues over residues 490–503 (SSKDDSDDESSKKE) and 513–528 (SDKDSDSEKESSDKKD). The segment covering 529 to 540 (KKDKKEKKKSKN) has biased composition (basic residues).

Belongs to the pseudouridine synthase TruB family. As to quaternary structure, component of the small nucleolar ribonucleoprotein particles containing H/ACA-type snoRNAs (H/ACA snoRNPs).

The protein resides in the nucleus. It localises to the nucleolus. The enzyme catalyses a uridine in RNA = a pseudouridine in RNA. Plays a central role in ribosomal RNA processing. Probable catalytic subunit of H/ACA small nucleolar ribonucleoprotein (H/ACA snoRNP) complex, which catalyzes pseudouridylation of rRNA. This involves the isomerization of uridine such that the ribose is subsequently attached to C5, instead of the normal N1. Pseudouridine ('psi') residues may serve to stabilize the conformation of rRNAs. The protein is Probable H/ACA ribonucleoprotein complex subunit 4 (nola4) of Dictyostelium discoideum (Social amoeba).